We begin with the raw amino-acid sequence, 200 residues long: Small ribosomal subunit protein eS1 (200 aa).

Belongs to the eukaryotic ribosomal protein eS1 family.

The chain is Small ribosomal subunit protein eS1 from Thermococcus onnurineus (strain NA1).